The primary structure comprises 89 residues: Cell division topological specificity factor (89 aa).

Belongs to the MinE family.

Its function is as follows. Prevents the cell division inhibition by proteins MinC and MinD at internal division sites while permitting inhibition at polar sites. This ensures cell division at the proper site by restricting the formation of a division septum at the midpoint of the long axis of the cell. This is Cell division topological specificity factor from Photorhabdus laumondii subsp. laumondii (strain DSM 15139 / CIP 105565 / TT01) (Photorhabdus luminescens subsp. laumondii).